The primary structure comprises 219 residues: RNA chaperone ProQ (219 aa).

Residues 102–160 are disordered; that stretch reads TLKESQDKAKAKRAERSKDEGDAADKAPRKPKRKPQPQARRDAKPAAKDKPKAAPKAPA. Basic and acidic residues-rich tracts occupy residues 105-129 and 140-153; these read ESQD…DKAP and ARRD…DKPK.

The protein belongs to the ProQ family.

Its subcellular location is the cytoplasm. Functionally, RNA chaperone with significant RNA binding, RNA strand exchange and RNA duplexing activities. This is RNA chaperone ProQ from Shewanella amazonensis (strain ATCC BAA-1098 / SB2B).